Consider the following 208-residue polypeptide: Imidazoleglycerol-phosphate dehydratase (208 aa).

Belongs to the imidazoleglycerol-phosphate dehydratase family.

Its subcellular location is the cytoplasm. The enzyme catalyses D-erythro-1-(imidazol-4-yl)glycerol 3-phosphate = 3-(imidazol-4-yl)-2-oxopropyl phosphate + H2O. The protein operates within amino-acid biosynthesis; L-histidine biosynthesis; L-histidine from 5-phospho-alpha-D-ribose 1-diphosphate: step 6/9. The protein is Imidazoleglycerol-phosphate dehydratase of Symbiobacterium thermophilum (strain DSM 24528 / JCM 14929 / IAM 14863 / T).